The chain runs to 271 residues: Pyrroline-5-carboxylate reductase (271 aa).

It belongs to the pyrroline-5-carboxylate reductase family.

It is found in the cytoplasm. It catalyses the reaction L-proline + NADP(+) = (S)-1-pyrroline-5-carboxylate + NADPH + 2 H(+). The catalysed reaction is L-proline + NAD(+) = (S)-1-pyrroline-5-carboxylate + NADH + 2 H(+). The protein operates within amino-acid biosynthesis; L-proline biosynthesis; L-proline from L-glutamate 5-semialdehyde: step 1/1. Functionally, catalyzes the reduction of 1-pyrroline-5-carboxylate (PCA) to L-proline. The chain is Pyrroline-5-carboxylate reductase from Staphylococcus saprophyticus subsp. saprophyticus (strain ATCC 15305 / DSM 20229 / NCIMB 8711 / NCTC 7292 / S-41).